The primary structure comprises 292 residues: MIFALHGRPFKEDNIPYVQHLLYYLQKKEIQFLINESFVDYLVQCNILLPSFFTTFTNKTDLGKPDLMLSIGGDGTLLESATFIGDQNIPLVGINTGRLGFLATTPREELEGSVDELISGSYKLSERTLIKLISDEKLFGDLNFAMNEFALTKRDSSSMITVHTYIDGEFLNSYWADGLLVSTPTGSTGYSLSCGGPLVHPKTENFIITPISPHNLNVRPMIVPDSCHISFEIEGRNQNFLISLDSRAEIVSSNIKLSVKKEDFKIQLVELKNYNYYKTLRSKLNWGLDARN.

The active-site Proton acceptor is Asp74. NAD(+)-binding positions include 74-75 (DG), 147-148 (NE), Asp177, and 188-193 (TGYSLS).

This sequence belongs to the NAD kinase family. A divalent metal cation serves as cofactor.

Its subcellular location is the cytoplasm. The catalysed reaction is NAD(+) + ATP = ADP + NADP(+) + H(+). Functionally, involved in the regulation of the intracellular balance of NAD and NADP, and is a key enzyme in the biosynthesis of NADP. Catalyzes specifically the phosphorylation on 2'-hydroxyl of the adenosine moiety of NAD to yield NADP. This chain is NAD kinase, found in Cytophaga hutchinsonii (strain ATCC 33406 / DSM 1761 / CIP 103989 / NBRC 15051 / NCIMB 9469 / D465).